The following is a 254-amino-acid chain: Glutamate racemase (254 aa).

Substrate contacts are provided by residues 10–11 (DS) and 42–43 (YG). Catalysis depends on C73, which acts as the Proton donor/acceptor. 74-75 (NT) contributes to the substrate binding site. C183 (proton donor/acceptor) is an active-site residue. Residue 184 to 185 (TH) coordinates substrate.

The protein belongs to the aspartate/glutamate racemases family.

It catalyses the reaction L-glutamate = D-glutamate. The protein operates within cell wall biogenesis; peptidoglycan biosynthesis. Provides the (R)-glutamate required for cell wall biosynthesis. The protein is Glutamate racemase of Herpetosiphon aurantiacus (strain ATCC 23779 / DSM 785 / 114-95).